Reading from the N-terminus, the 498-residue chain is ATP synthase subunit beta, chloroplastic (498 aa).

172–179 is an ATP binding site; sequence GGAGVGKT.

This sequence belongs to the ATPase alpha/beta chains family. In terms of assembly, F-type ATPases have 2 components, CF(1) - the catalytic core - and CF(0) - the membrane proton channel. CF(1) has five subunits: alpha(3), beta(3), gamma(1), delta(1), epsilon(1). CF(0) has four main subunits: a(1), b(1), b'(1) and c(9-12).

The protein resides in the plastid. The protein localises to the chloroplast thylakoid membrane. The catalysed reaction is ATP + H2O + 4 H(+)(in) = ADP + phosphate + 5 H(+)(out). Produces ATP from ADP in the presence of a proton gradient across the membrane. The catalytic sites are hosted primarily by the beta subunits. This is ATP synthase subunit beta, chloroplastic from Castanea sativa (Sweet chestnut).